The primary structure comprises 227 residues: Cytochrome c oxidase subunit 2 (227 aa).

Residues 1 to 14 (MAYPFQLGLQDATS) are Mitochondrial intermembrane-facing. The helical transmembrane segment at 15–45 (PIMEELTNFHDHTLMIVFLISSLVLYIISLM) threads the bilayer. Topologically, residues 46–59 (LTTKLTHTNTMDAQ) are mitochondrial matrix. A helical membrane pass occupies residues 60-87 (EVETIWTILPAVILILIALPSLRILYMM). Over 88 to 227 (DEINNPALTV…HFENWSASMI (140 aa)) the chain is Mitochondrial intermembrane. The Cu cation site is built by H161, C196, E198, C200, H204, and M207. E198 contributes to the Mg(2+) binding site.

It belongs to the cytochrome c oxidase subunit 2 family. Component of the cytochrome c oxidase (complex IV, CIV), a multisubunit enzyme composed of 14 subunits. The complex is composed of a catalytic core of 3 subunits MT-CO1, MT-CO2 and MT-CO3, encoded in the mitochondrial DNA, and 11 supernumerary subunits COX4I, COX5A, COX5B, COX6A, COX6B, COX6C, COX7A, COX7B, COX7C, COX8 and NDUFA4, which are encoded in the nuclear genome. The complex exists as a monomer or a dimer and forms supercomplexes (SCs) in the inner mitochondrial membrane with NADH-ubiquinone oxidoreductase (complex I, CI) and ubiquinol-cytochrome c oxidoreductase (cytochrome b-c1 complex, complex III, CIII), resulting in different assemblies (supercomplex SCI(1)III(2)IV(1) and megacomplex MCI(2)III(2)IV(2)). Found in a complex with TMEM177, COA6, COX18, COX20, SCO1 and SCO2. Interacts with TMEM177 in a COX20-dependent manner. Interacts with COX20. Interacts with COX16. Cu cation serves as cofactor.

Its subcellular location is the mitochondrion inner membrane. The catalysed reaction is 4 Fe(II)-[cytochrome c] + O2 + 8 H(+)(in) = 4 Fe(III)-[cytochrome c] + 2 H2O + 4 H(+)(out). Component of the cytochrome c oxidase, the last enzyme in the mitochondrial electron transport chain which drives oxidative phosphorylation. The respiratory chain contains 3 multisubunit complexes succinate dehydrogenase (complex II, CII), ubiquinol-cytochrome c oxidoreductase (cytochrome b-c1 complex, complex III, CIII) and cytochrome c oxidase (complex IV, CIV), that cooperate to transfer electrons derived from NADH and succinate to molecular oxygen, creating an electrochemical gradient over the inner membrane that drives transmembrane transport and the ATP synthase. Cytochrome c oxidase is the component of the respiratory chain that catalyzes the reduction of oxygen to water. Electrons originating from reduced cytochrome c in the intermembrane space (IMS) are transferred via the dinuclear copper A center (CU(A)) of subunit 2 and heme A of subunit 1 to the active site in subunit 1, a binuclear center (BNC) formed by heme A3 and copper B (CU(B)). The BNC reduces molecular oxygen to 2 water molecules using 4 electrons from cytochrome c in the IMS and 4 protons from the mitochondrial matrix. This chain is Cytochrome c oxidase subunit 2 (MT-CO2), found in Sundamys muelleri (Mueller's giant sunda rat).